Consider the following 557-residue polypeptide: Dihydroxy-acid dehydratase (557 aa).

C50 is a [2Fe-2S] cluster binding site. Position 82 (D82) interacts with Mg(2+). Residue C123 coordinates [2Fe-2S] cluster. Mg(2+) contacts are provided by D124 and K125. K125 carries the post-translational modification N6-carboxylysine. C195 serves as a coordination point for [2Fe-2S] cluster. E447 is a binding site for Mg(2+). The Proton acceptor role is filled by S473.

This sequence belongs to the IlvD/Edd family. In terms of assembly, homodimer. It depends on [2Fe-2S] cluster as a cofactor. Mg(2+) is required as a cofactor.

The enzyme catalyses (2R)-2,3-dihydroxy-3-methylbutanoate = 3-methyl-2-oxobutanoate + H2O. The catalysed reaction is (2R,3R)-2,3-dihydroxy-3-methylpentanoate = (S)-3-methyl-2-oxopentanoate + H2O. The protein operates within amino-acid biosynthesis; L-isoleucine biosynthesis; L-isoleucine from 2-oxobutanoate: step 3/4. It functions in the pathway amino-acid biosynthesis; L-valine biosynthesis; L-valine from pyruvate: step 3/4. Functionally, functions in the biosynthesis of branched-chain amino acids. Catalyzes the dehydration of (2R,3R)-2,3-dihydroxy-3-methylpentanoate (2,3-dihydroxy-3-methylvalerate) into 2-oxo-3-methylpentanoate (2-oxo-3-methylvalerate) and of (2R)-2,3-dihydroxy-3-methylbutanoate (2,3-dihydroxyisovalerate) into 2-oxo-3-methylbutanoate (2-oxoisovalerate), the penultimate precursor to L-isoleucine and L-valine, respectively. The polypeptide is Dihydroxy-acid dehydratase (Nitrosospira multiformis (strain ATCC 25196 / NCIMB 11849 / C 71)).